Here is a 223-residue protein sequence, read N- to C-terminus: UPF0173 metal-dependent hydrolase TV0864 (223 aa).

The protein belongs to the UPF0173 family.

The polypeptide is UPF0173 metal-dependent hydrolase TV0864 (Thermoplasma volcanium (strain ATCC 51530 / DSM 4299 / JCM 9571 / NBRC 15438 / GSS1)).